The sequence spans 469 residues: Adenosylhomocysteinase (469 aa).

Positions 63, 139, and 164 each coordinate substrate. Position 165–167 (165–167 (TTT)) interacts with NAD(+). Residues Lys194 and Asp198 each contribute to the substrate site. NAD(+) contacts are provided by residues Asn199, 228–233 (GYGDVG), Glu251, Asn300, 321–323 (IGH), and Asn375.

The protein belongs to the adenosylhomocysteinase family. Requires NAD(+) as cofactor.

The protein localises to the cytoplasm. The enzyme catalyses S-adenosyl-L-homocysteine + H2O = L-homocysteine + adenosine. It participates in amino-acid biosynthesis; L-homocysteine biosynthesis; L-homocysteine from S-adenosyl-L-homocysteine: step 1/1. Functionally, may play a key role in the regulation of the intracellular concentration of adenosylhomocysteine. The chain is Adenosylhomocysteinase from Pseudomonas fluorescens (strain Pf0-1).